We begin with the raw amino-acid sequence, 86 residues long: Apolipoprotein C-I (86 aa).

The N-terminal stretch at 1–26 is a signal peptide; sequence MRLFLSLPVLVVVLLMILEGPGPAQG.

Belongs to the apolipoprotein C1 family.

Its subcellular location is the secreted. Its function is as follows. Inhibitor of lipoprotein binding to the low density lipoprotein (LDL) receptor, LDL receptor-related protein, and very low density lipoprotein (VLDL) receptor. Associates with high density lipoproteins (HDL) and the triacylglycerol-rich lipoproteins in the plasma and makes up about 10% of the protein of the VLDL and 2% of that of HDL. Appears to interfere directly with fatty acid uptake and is also the major plasma inhibitor of cholesteryl ester transfer protein (CETP). Binds free fatty acids and reduces their intracellular esterification. Modulates the interaction of APOE with beta-migrating VLDL and inhibits binding of beta-VLDL to the LDL receptor-related protein. This Ateles geoffroyi (Black-handed spider monkey) protein is Apolipoprotein C-I (APOC1).